Reading from the N-terminus, the 281-residue chain is Elongation factor Ts (281 aa).

Residues 80–83 (TDFV) are involved in Mg(2+) ion dislocation from EF-Tu.

The protein belongs to the EF-Ts family.

Its subcellular location is the cytoplasm. Functionally, associates with the EF-Tu.GDP complex and induces the exchange of GDP to GTP. It remains bound to the aminoacyl-tRNA.EF-Tu.GTP complex up to the GTP hydrolysis stage on the ribosome. This is Elongation factor Ts from Vibrio parahaemolyticus serotype O3:K6 (strain RIMD 2210633).